The following is a 149-amino-acid chain: Cytochrome c-type biogenesis protein CcmE (149 aa).

Over 1–7 (MKARHKR) the chain is Cytoplasmic. Residues 8–28 (LGLIVAGLAALGLGAALVLSA) form a helical; Signal-anchor for type II membrane protein membrane-spanning segment. Over 29–149 (FQKNLVFFFT…GAPALAGALK (121 aa)) the chain is Periplasmic. Heme-binding residues include His123 and Tyr127.

This sequence belongs to the CcmE/CycJ family.

The protein resides in the cell inner membrane. In terms of biological role, heme chaperone required for the biogenesis of c-type cytochromes. Transiently binds heme delivered by CcmC and transfers the heme to apo-cytochromes in a process facilitated by CcmF and CcmH. The chain is Cytochrome c-type biogenesis protein CcmE from Polaromonas naphthalenivorans (strain CJ2).